A 1055-amino-acid chain; its full sequence is MIDVNKFESMQIGLASPDKIRMWSYGEVKKPETINYRTLKPEKDGLFDERIFGPTKDYECACGKYKRIRYKGIVCDRCGVEVTKSKVRRERMGHIELAAPVTHIWYFKGIPSRMGLVLDMSPRSLEEIIYFASYVVVDPGDTPLEKKQLLTEREYRAKLDEYGNRFVAKIGGEAIQALLQSVDLEKEANLLKEELKEASGQKRTRAVRRLDIIEAFIKSGNHPDWMVMDAIPVMPPDLRPMVQLDGGRFATSDLKHLYRRVINRNNRLKRLLDLNAPGIIVQNEKRMLQEAVDALIDNGRRGRPVAGPGNRPLKSLSHMLKGKQEGFRQNLLGKRVDYSGRSVIDVGPSLKMNQMGLPVPMAMELFKPFIMKELVSRNLASNIKNAKRKIDRKDEEVYDVLEDVIKEHPVLLNRAPTLHRLGIQAFEPVLVSGKAMRLHPLACEAYNADFDGDQMAIHVPLSNEAQAEARLLMLAAHHILAPKDGKPVVTPSQDMVIGNYWLTMERAESVGEGMIFNDLDEVKLALQNGYVSIHTRIGVRASSMPEKPFTDQQRQQILITTAGKMLFNDILPKDFVYLNAPTNEKLVNGTPDEYFLEAGEDIHEQLNQRPLLSPFKSGFLSDVIAEVYKQYKVTETSLLLDRMKDLGFYRSTLSGLTVGIADITNLPDKPAIIAAAHKKVATVTKQFRRGLITDDERYERVIGIWNDAKDEIQQRLMDTFDPQNPIFMMSDSGARGNISNFTQLAGMRGLMAAPNGKIMELPILSNFREGLSVLEMFISTHGARKGMTDTALKTANSGYLTRRLVDVAQDVIVREKDCGTDRGLLITAIAEGNEMIEPLYDRILGRYTMKSVINPETGKVIVGQNEMIDERSAQEIIDAGIQEVTIRSAFTCNTAHGVCEKCYGRNMATGDRVEVGEAVGTVAAQSIGEPGTQLTMRNFHTGGVAGNADITQGLPRIQEIVEARNPKGPAEISEVTGVVESIEEDPAEGTKEVTVKGETDSRTYSLPITARMKVAEGDYIHRGAPLNEGSIDPKKLIKVRDVLSTENYLLSEIQK.

Residues Cys60, Cys62, Cys75, and Cys78 each coordinate Zn(2+). Residues Asp449, Asp451, and Asp453 each coordinate Mg(2+). Cys818, Cys892, Cys899, and Cys902 together coordinate Zn(2+).

The protein belongs to the RNA polymerase beta' chain family. The RNAP catalytic core consists of 2 alpha, 1 beta, 1 beta' and 1 omega subunit. When a sigma factor is associated with the core the holoenzyme is formed, which can initiate transcription. Mg(2+) is required as a cofactor. Requires Zn(2+) as cofactor.

It carries out the reaction RNA(n) + a ribonucleoside 5'-triphosphate = RNA(n+1) + diphosphate. DNA-dependent RNA polymerase catalyzes the transcription of DNA into RNA using the four ribonucleoside triphosphates as substrates. The sequence is that of DNA-directed RNA polymerase subunit beta' from Pediococcus acidilactici.